A 495-amino-acid polypeptide reads, in one-letter code: ATP synthase subunit beta, chloroplastic (495 aa).

172-179 (GGAGVGKT) serves as a coordination point for ATP.

Belongs to the ATPase alpha/beta chains family. As to quaternary structure, F-type ATPases have 2 components, CF(1) - the catalytic core - and CF(0) - the membrane proton channel. CF(1) has five subunits: alpha(3), beta(3), gamma(1), delta(1), epsilon(1). CF(0) has four main subunits: a(1), b(1), b'(1) and c(9-12).

It localises to the plastid. Its subcellular location is the chloroplast thylakoid membrane. It carries out the reaction ATP + H2O + 4 H(+)(in) = ADP + phosphate + 5 H(+)(out). Functionally, produces ATP from ADP in the presence of a proton gradient across the membrane. The catalytic sites are hosted primarily by the beta subunits. This Bowiea volubilis (Climbing onion) protein is ATP synthase subunit beta, chloroplastic.